The primary structure comprises 392 residues: L-rhamnonate dehydratase (392 aa).

The substrate site is built by His-22 and Arg-48. Residues Asp-214, Glu-240, and Glu-268 each coordinate Mg(2+). The Proton acceptor role is filled by His-318. Glu-338 is a binding site for substrate.

Belongs to the mandelate racemase/muconate lactonizing enzyme family. RhamD subfamily. In terms of assembly, homooctamer; tetramer of dimers. Requires Mg(2+) as cofactor.

The catalysed reaction is L-rhamnonate = 2-dehydro-3-deoxy-L-rhamnonate + H2O. In terms of biological role, catalyzes the dehydration of L-rhamnonate to 2-keto-3-deoxy-L-rhamnonate (KDR). The polypeptide is L-rhamnonate dehydratase (Paraburkholderia phytofirmans (strain DSM 17436 / LMG 22146 / PsJN) (Burkholderia phytofirmans)).